The sequence spans 144 residues: Large ribosomal subunit protein uL13 (144 aa).

Belongs to the universal ribosomal protein uL13 family. Part of the 50S ribosomal subunit.

In terms of biological role, this protein is one of the early assembly proteins of the 50S ribosomal subunit, although it is not seen to bind rRNA by itself. It is important during the early stages of 50S assembly. This chain is Large ribosomal subunit protein uL13, found in Nitrosospira multiformis (strain ATCC 25196 / NCIMB 11849 / C 71).